The primary structure comprises 97 residues: Co-chaperonin GroES (97 aa).

Belongs to the GroES chaperonin family. As to quaternary structure, heptamer of 7 subunits arranged in a ring. Interacts with the chaperonin GroEL.

It localises to the cytoplasm. Its function is as follows. Together with the chaperonin GroEL, plays an essential role in assisting protein folding. The GroEL-GroES system forms a nano-cage that allows encapsulation of the non-native substrate proteins and provides a physical environment optimized to promote and accelerate protein folding. GroES binds to the apical surface of the GroEL ring, thereby capping the opening of the GroEL channel. This Pseudomonas aeruginosa (strain LESB58) protein is Co-chaperonin GroES.